The sequence spans 173 residues: Shikimate kinase 1 (173 aa).

14–19 (GAGKST) contributes to the ATP binding site. S18 provides a ligand contact to Mg(2+). Substrate is bound by residues D36, R60, and G82. R120 is an ATP binding site. R140 serves as a coordination point for substrate. Q157 serves as a coordination point for ATP.

Belongs to the shikimate kinase family. As to quaternary structure, monomer. Requires Mg(2+) as cofactor.

The protein localises to the cytoplasm. The catalysed reaction is shikimate + ATP = 3-phosphoshikimate + ADP + H(+). The protein operates within metabolic intermediate biosynthesis; chorismate biosynthesis; chorismate from D-erythrose 4-phosphate and phosphoenolpyruvate: step 5/7. In terms of biological role, catalyzes the specific phosphorylation of the 3-hydroxyl group of shikimic acid using ATP as a cosubstrate. This chain is Shikimate kinase 1, found in Serratia proteamaculans (strain 568).